Here is a 292-residue protein sequence, read N- to C-terminus: MSDAPIGIFDSGVGGLTVARAVLDQLPHESVLYVGDTARTPYGPRPIAQVREYSLEILDSLVASGVKALVIACNSASAAMLADARERYEGDGVPVVEVIRPAVRRAAAATRNGRIGVIGTRATISSRAYEDAFAAAPQLQLHTRACPDFVELVEDGETSGPAVLASAHAYLDPLRDAGVDTLVLGCTHYPLLAGAISYVMGEGVTLVSSAEETALDVYRTLVAHDLLRSADGARGDDGARSAPRHRFLATGDPAAFTRLARRFLGPEVDDVHDAVEVTGEIPRITAPLRGTR.

Residues 10–11 and 42–43 each bind substrate; these read DS and YG. Cysteine 73 acts as the Proton donor/acceptor in catalysis. Position 74–75 (74–75) interacts with substrate; the sequence is NS. Catalysis depends on cysteine 186, which acts as the Proton donor/acceptor. 187 to 188 is a substrate binding site; that stretch reads TH.

Belongs to the aspartate/glutamate racemases family.

It carries out the reaction L-glutamate = D-glutamate. It participates in cell wall biogenesis; peptidoglycan biosynthesis. In terms of biological role, provides the (R)-glutamate required for cell wall biosynthesis. In Beutenbergia cavernae (strain ATCC BAA-8 / DSM 12333 / CCUG 43141 / JCM 11478 / NBRC 16432 / NCIMB 13614 / HKI 0122), this protein is Glutamate racemase.